The sequence spans 210 residues: Large ribosomal subunit protein uL3 (210 aa).

This sequence belongs to the universal ribosomal protein uL3 family. In terms of assembly, part of the 50S ribosomal subunit. Forms a cluster with proteins L14 and L19.

Functionally, one of the primary rRNA binding proteins, it binds directly near the 3'-end of the 23S rRNA, where it nucleates assembly of the 50S subunit. This chain is Large ribosomal subunit protein uL3, found in Caldicellulosiruptor saccharolyticus (strain ATCC 43494 / DSM 8903 / Tp8T 6331).